The chain runs to 1542 residues: ABC multidrug transporter AFR1 (1542 aa).

2 disordered regions span residues 1 to 84 and 118 to 141; these read MSAA…LPAD and SQQS…FSRK. Polar residues predominate over residues 18–41; it reads TATTQNPSGLANSQVTSDPVPSAT. Positions 60 to 69 are enriched in basic and acidic residues; that stretch reads DKSVDAEKVE. 2 N-linked (GlcNAc...) asparagine glycosylation sites follow: Asn-207 and Asn-397. The ABC transporter 1 domain maps to 221 to 473; that stretch reads LKVLGIFGVN…MIGLGYRDLP (253 aa). 5 helical membrane-spanning segments follow: residues 584–604, 618–638, 669–689, 694–714, and 726–746; these read FGIS…GSVY, GGLL…ELPS, VPYN…MGGL, GAFF…SAFF, and VAAR…GYMI. Asn-822 carries N-linked (GlcNAc...) asparagine glycosylation. Residues 844–864 traverse the membrane as a helical segment; that stretch reads FGILVGFFAFFMFLQMMFIEY. Residues 917–1159 form the ABC transporter 2 domain; it reads FTWEGLNYTV…VLIDYLERNG (243 aa). Asn-923 carries an N-linked (GlcNAc...) asparagine glycan. Residue 953–960 coordinates ATP; the sequence is GASGAGKT. 6 helical membrane-spanning segments follow: residues 1253–1273, 1284–1304, 1335–1355, 1365–1385, 1390–1410, and 1516–1536; these read WTRL…FLQL, VFAI…IEPQ, MPYS…GVGF, FFLM…AVAA, ILIA…FCGV, and FGIF…AARF.

It belongs to the ABC transporter superfamily. ABCG family. PDR (TC 3.A.1.205) subfamily.

The protein resides in the cell membrane. The enzyme catalyses itraconazole(in) + ATP + H2O = itraconazole(out) + ADP + phosphate + H(+). It carries out the reaction voriconazole(in) + ATP + H2O = voriconazole(out) + ADP + phosphate + H(+). The catalysed reaction is fluconazole(in) + ATP + H2O = fluconazole(out) + ADP + phosphate + H(+). In terms of biological role, major pleiotropic ABC efflux transporter that confers resistance to structurally and functionally unrelated compounds including azoles such as fluconazole (FLC), itraconazole (ITC), posaconazole (POS), and voriconazole (VRC). Is also able to efflux the eukaryote protein synthesis inhibitor cycloheximide (CHX). The chain is ABC multidrug transporter AFR1 from Cryptococcus deuterogattii (strain R265) (Cryptococcus gattii VGII (strain R265)).